The primary structure comprises 98 residues: Large ribosomal subunit protein eL21 (98 aa).

Basic residues predominate over residues 1–17 (MQRSRGFRSKSRRKMTK). The segment at 1 to 28 (MQRSRGFRSKSRRKMTKVVREGRSNPIT) is disordered.

The protein belongs to the eukaryotic ribosomal protein eL21 family.

The sequence is that of Large ribosomal subunit protein eL21 from Methanobrevibacter smithii (strain ATCC 35061 / DSM 861 / OCM 144 / PS).